The chain runs to 2219 residues: RNA-directed RNA polymerase L (2219 aa).

Residues 26-289 (KLAFLVQTEP…TTEDDVEYLI (264 aa)) are endonuclease. The Mn(2+) site is built by Glu-51, Asp-89, and Glu-102. The active site involves Lys-115. The region spanning 1177–1373 (LSMKLNVSLA…YMSDQLNKFV (197 aa)) is the RdRp catalytic domain. Asp-1335 provides a ligand contact to Mg(2+).

This sequence belongs to the Bunyavirales RNA polymerase family. As to quaternary structure, homomultimer; the oligomeric structure is essential for the polymerase activity. Interacts with nucleoprotein N. Interacts with protein Z; this interaction inhibits viral transcription and replication, Z partially blocks the product exit tunnel for the releasing nascent RNA product. Requires Mn(2+) as cofactor. It depends on Mg(2+) as a cofactor.

It is found in the virion. The protein localises to the host cytoplasm. The enzyme catalyses RNA(n) + a ribonucleoside 5'-triphosphate = RNA(n+1) + diphosphate. In terms of biological role, RNA-dependent RNA polymerase, which is responsible for the replication and transcription of the viral RNA genome using antigenomic RNA as an intermediate. During transcription, synthesizes subgenomic RNAs and assures their capping by a cap-snatching mechanism, which involves the endonuclease activity cleaving the host capped pre-mRNAs. These short capped RNAs are then used as primers for viral transcription. The 3'-end of subgenomic mRNAs molecules are heterogeneous and not polyadenylated. The replicase function is to direct synthesis of antigenomic and genomic RNA which are encapsidated and non capped. As a consequence of the use of the same enzyme for both transcription and replication, these mechanisms need to be well coordinated. These processes may be regulated by proteins N and Z in a dose-dependent manner. Z protein inhibits the viral polymerase L und thus the viral transcription and RNA synthesis. This chain is RNA-directed RNA polymerase L, found in Homo sapiens (Human).